Reading from the N-terminus, the 142-residue chain is Ribosome-binding factor A (142 aa).

The disordered stretch occupies residues 119–142 (EAKQKQHGVETDAEQGDTKEEGDK).

It belongs to the RbfA family. As to quaternary structure, monomer. Binds 30S ribosomal subunits, but not 50S ribosomal subunits or 70S ribosomes.

It localises to the cytoplasm. Functionally, one of several proteins that assist in the late maturation steps of the functional core of the 30S ribosomal subunit. Associates with free 30S ribosomal subunits (but not with 30S subunits that are part of 70S ribosomes or polysomes). Required for efficient processing of 16S rRNA. May interact with the 5'-terminal helix region of 16S rRNA. The chain is Ribosome-binding factor A from Shewanella pealeana (strain ATCC 700345 / ANG-SQ1).